A 423-amino-acid chain; its full sequence is AP-1 complex subunit mu-2 (423 aa).

Residues 168 to 421 (KNEVFIDVIE…ITQSGDYQLR (254 aa)) form the MHD domain.

Belongs to the adaptor complexes medium subunit family. As to quaternary structure, adaptor protein complex 1 (AP-1) is a heterotetramer composed of two large adaptins (gamma-type subunit AP1G1 and beta-type subunit AP1B1), a medium adaptin (mu-type subunit AP1M1 or AP1M2) and a small adaptin (sigma-type subunit AP1S1 or AP1S2 or AP1S3). Interacts with P2X4. Post-translationally, phosphorylation of membrane-bound AP1M1/AP1M2 increases its affinity for sorting signals.

The protein localises to the golgi apparatus. It is found in the cytoplasmic vesicle. The protein resides in the clathrin-coated vesicle membrane. Functionally, subunit of clathrin-associated adaptor protein complex 1 that plays a role in protein sorting in the trans-Golgi network (TGN) and endosomes. The AP complexes mediate the recruitment of clathrin to membranes and the recognition of sorting signals within the cytosolic tails of transmembrane cargo molecules. In Homo sapiens (Human), this protein is AP-1 complex subunit mu-2 (AP1M2).